Reading from the N-terminus, the 149-residue chain is Large ribosomal subunit protein bL9 (149 aa).

This sequence belongs to the bacterial ribosomal protein bL9 family.

Its function is as follows. Binds to the 23S rRNA. This chain is Large ribosomal subunit protein bL9, found in Thermotoga maritima (strain ATCC 43589 / DSM 3109 / JCM 10099 / NBRC 100826 / MSB8).